Reading from the N-terminus, the 137-residue chain is Phosphoinositide-interacting protein (137 aa).

2 helical membrane-spanning segments follow: residues 56–76 (IVIMSVGGAILLFGVVITCLA) and 94–114 (PGFLSLGLMMLVCGLVWVPII).

Interacts with TRPV1.

The protein resides in the membrane. Regulatory subunit of TRPV1, a molecular sensor of noxious heat and capsaicin. Positively regulates TRPV1 channel activity via phosphatidylinositol 4,5-bisphosphate (PIP2). Binds various phosphoinositide, including phosphatidylinositol 4,5-bisphosphate (PIP2), but not phosphatidylinositol (PI). In Homo sapiens (Human), this protein is Phosphoinositide-interacting protein (PIRT).